We begin with the raw amino-acid sequence, 187 residues long: Casparian strip membrane protein 5 (187 aa).

The Cytoplasmic segment spans residues 1-24 (MKSGQAEIMETSKGIQKSGLMSRR). The helical transmembrane segment at 25 to 45 (IAILEFILRIVAFFNTIGSAI) threads the bilayer. The Extracellular portion of the chain corresponds to 46-74 (LMGTTHETLPFFTQFIRFQAEYNDLPALT). The helical transmembrane segment at 75–95 (FFVVANAVVSGYLILSLTLAF) threads the bilayer. Residues 96 to 107 (VHIVKRKTQNTR) lie on the Cytoplasmic side of the membrane. Residues 108–128 (ILLIILDVAMLGLLTSGASSA) form a helical membrane-spanning segment. The Extracellular segment spans residues 129 to 161 (AAIVYLAHNGNNKTNWFAICQQFNSFCERISGS). Asn140 carries N-linked (GlcNAc...) asparagine glycosylation. A helical membrane pass occupies residues 162 to 182 (LIGSFIAIVLLILLILLSAIA). Residues 183 to 187 (LSRRH) lie on the Cytoplasmic side of the membrane.

Belongs to the Casparian strip membrane proteins (CASP) family. In terms of assembly, homodimer and heterodimers with other CASP proteins. Interacts with CASP1, CASP3 and CASP4.

Its subcellular location is the cell membrane. Its function is as follows. Regulates membrane-cell wall junctions and localized cell wall deposition. Required for establishment of the Casparian strip membrane domain (CSD) and the subsequent formation of Casparian strips, a cell wall modification of the root endodermis that determines an apoplastic barrier between the intraorganismal apoplasm and the extraorganismal apoplasm and prevents lateral diffusion. The chain is Casparian strip membrane protein 5 (CASP5) from Arabidopsis thaliana (Mouse-ear cress).